Reading from the N-terminus, the 45-residue chain is Iota-conotoxin-like R11.12 (45 aa).

4 cysteine pairs are disulfide-bonded: Cys5–Cys19, Cys12–Cys22, Cys18–Cys27, and Cys21–Cys36. At Leu43 the chain carries D-leucine. Residue Arg45 is a propeptide, removed by a carboxypeptidase.

Belongs to the conotoxin I1 superfamily. As to expression, expressed by the venom duct.

It localises to the secreted. Iota-conotoxins bind to voltage-gated sodium channels (Nav) and act as agonists by shifting the voltage-dependence of activation to more hyperpolarized levels. Produces general excitatory symptoms. The polypeptide is Iota-conotoxin-like R11.12 (Conus radiatus (Rayed cone)).